Reading from the N-terminus, the 239-residue chain is DnaA regulatory inactivator Hda (239 aa).

The protein belongs to the DnaA family. HdA subfamily. In terms of assembly, the active form seems to be an ADP-bound monomer. Forms the RIDA complex (regulatory inactivation of DnaA) of ATP-DnaA, ADP-Hda and the DNA-loaded beta sliding clamp (dnaN).

Functionally, mediates the interaction of DNA replication initiator protein DnaA with DNA polymerase subunit beta sliding clamp (dnaN). Stimulates hydrolysis of ATP-DnaA to ADP-DnaA, rendering DnaA inactive for reinitiation, a process called regulatory inhibition of DnaA or RIDA. The chain is DnaA regulatory inactivator Hda from Yersinia pseudotuberculosis serotype O:1b (strain IP 31758).